The sequence spans 507 residues: ATP synthase subunit alpha, chloroplastic (507 aa).

170–177 (GDRQTGKT) lines the ATP pocket.

Belongs to the ATPase alpha/beta chains family. In terms of assembly, F-type ATPases have 2 components, CF(1) - the catalytic core - and CF(0) - the membrane proton channel. CF(1) has five subunits: alpha(3), beta(3), gamma(1), delta(1), epsilon(1). CF(0) has four main subunits: a, b, b' and c.

The protein localises to the plastid. It is found in the chloroplast thylakoid membrane. The catalysed reaction is ATP + H2O + 4 H(+)(in) = ADP + phosphate + 5 H(+)(out). Functionally, produces ATP from ADP in the presence of a proton gradient across the membrane. The alpha chain is a regulatory subunit. The polypeptide is ATP synthase subunit alpha, chloroplastic (Daucus carota (Wild carrot)).